Here is a 160-residue protein sequence, read N- to C-terminus: 6,7-dimethyl-8-ribityllumazine synthase (160 aa).

5-amino-6-(D-ribitylamino)uracil-binding positions include F32, 66-68, and 90-92; these read ALE and CII. 95–96 lines the (2S)-2-hydroxy-3-oxobutyl phosphate pocket; that stretch reads ET. The active-site Proton donor is the H98. N123 is a 5-amino-6-(D-ribitylamino)uracil binding site. A (2S)-2-hydroxy-3-oxobutyl phosphate-binding site is contributed by R137.

It belongs to the DMRL synthase family.

It carries out the reaction (2S)-2-hydroxy-3-oxobutyl phosphate + 5-amino-6-(D-ribitylamino)uracil = 6,7-dimethyl-8-(1-D-ribityl)lumazine + phosphate + 2 H2O + H(+). It participates in cofactor biosynthesis; riboflavin biosynthesis; riboflavin from 2-hydroxy-3-oxobutyl phosphate and 5-amino-6-(D-ribitylamino)uracil: step 1/2. In terms of biological role, catalyzes the formation of 6,7-dimethyl-8-ribityllumazine by condensation of 5-amino-6-(D-ribitylamino)uracil with 3,4-dihydroxy-2-butanone 4-phosphate. This is the penultimate step in the biosynthesis of riboflavin. The sequence is that of 6,7-dimethyl-8-ribityllumazine synthase from Methylibium petroleiphilum (strain ATCC BAA-1232 / LMG 22953 / PM1).